A 390-amino-acid polypeptide reads, in one-letter code: 1-deoxy-D-xylulose 5-phosphate reductoisomerase (390 aa).

8 residues coordinate NADPH: T10, G11, S12, I13, A36, K37, N38, and N122. Position 123 (K123) interacts with 1-deoxy-D-xylulose 5-phosphate. E124 serves as a coordination point for NADPH. Position 148 (D148) interacts with Mn(2+). 1-deoxy-D-xylulose 5-phosphate is bound by residues S149, E150, S174, and H197. Mn(2+) is bound at residue E150. G203 contacts NADPH. S210, N215, K216, and E219 together coordinate 1-deoxy-D-xylulose 5-phosphate. E219 contacts Mn(2+).

This sequence belongs to the DXR family. Mg(2+) serves as cofactor. Mn(2+) is required as a cofactor.

It carries out the reaction 2-C-methyl-D-erythritol 4-phosphate + NADP(+) = 1-deoxy-D-xylulose 5-phosphate + NADPH + H(+). Its pathway is isoprenoid biosynthesis; isopentenyl diphosphate biosynthesis via DXP pathway; isopentenyl diphosphate from 1-deoxy-D-xylulose 5-phosphate: step 1/6. Its function is as follows. Catalyzes the NADPH-dependent rearrangement and reduction of 1-deoxy-D-xylulose-5-phosphate (DXP) to 2-C-methyl-D-erythritol 4-phosphate (MEP). The polypeptide is 1-deoxy-D-xylulose 5-phosphate reductoisomerase (Trichlorobacter lovleyi (strain ATCC BAA-1151 / DSM 17278 / SZ) (Geobacter lovleyi)).